We begin with the raw amino-acid sequence, 278 residues long: Soluble NSF attachment protein homolog FPV011 (278 aa).

This sequence belongs to the SNAP family.

This chain is Soluble NSF attachment protein homolog FPV011, found in Fowlpox virus (strain NVSL) (FPV).